The sequence spans 213 residues: Redox-sensing transcriptional repressor Rex (213 aa).

Positions 16 to 55 form a DNA-binding region, H-T-H motif; that stretch reads VYSRFLERMDRNGIVTVSSGEIAEGVGVSSAQVRKDLAYF. 90-95 serves as a coordination point for NAD(+); that stretch reads GAGNLG.

The protein belongs to the transcriptional regulatory Rex family. In terms of assembly, homodimer.

Its subcellular location is the cytoplasm. Functionally, modulates transcription in response to changes in cellular NADH/NAD(+) redox state. The chain is Redox-sensing transcriptional repressor Rex from Pelotomaculum thermopropionicum (strain DSM 13744 / JCM 10971 / SI).